The following is a 148-amino-acid chain: Nucleoside diphosphate kinase (148 aa).

Residues lysine 9, phenylalanine 57, arginine 85, threonine 91, arginine 102, and asparagine 112 each coordinate ATP. Threonine 91 carries the phosphothreonine modification. Catalysis depends on histidine 115, which acts as the Pros-phosphohistidine intermediate. Serine 122 carries the post-translational modification Phosphoserine.

The protein belongs to the NDK family. In terms of assembly, homotetramer. It depends on Mg(2+) as a cofactor.

The protein localises to the cytoplasm. It carries out the reaction a 2'-deoxyribonucleoside 5'-diphosphate + ATP = a 2'-deoxyribonucleoside 5'-triphosphate + ADP. It catalyses the reaction a ribonucleoside 5'-diphosphate + ATP = a ribonucleoside 5'-triphosphate + ADP. Functionally, major role in the synthesis of nucleoside triphosphates other than ATP. The ATP gamma phosphate is transferred to the NDP beta phosphate via a ping-pong mechanism, using a phosphorylated active-site intermediate. This is Nucleoside diphosphate kinase from Bacillus licheniformis (strain ATCC 14580 / DSM 13 / JCM 2505 / CCUG 7422 / NBRC 12200 / NCIMB 9375 / NCTC 10341 / NRRL NRS-1264 / Gibson 46).